We begin with the raw amino-acid sequence, 379 residues long: ATP phosphoribosyltransferase regulatory subunit (379 aa).

Belongs to the class-II aminoacyl-tRNA synthetase family. HisZ subfamily. Heteromultimer composed of HisG and HisZ subunits.

Its subcellular location is the cytoplasm. It participates in amino-acid biosynthesis; L-histidine biosynthesis; L-histidine from 5-phospho-alpha-D-ribose 1-diphosphate: step 1/9. Required for the first step of histidine biosynthesis. May allow the feedback regulation of ATP phosphoribosyltransferase activity by histidine. In Caldanaerobacter subterraneus subsp. tengcongensis (strain DSM 15242 / JCM 11007 / NBRC 100824 / MB4) (Thermoanaerobacter tengcongensis), this protein is ATP phosphoribosyltransferase regulatory subunit.